Reading from the N-terminus, the 172-residue chain is Co-chaperone protein HscB homolog (172 aa).

Residues 2-74 form the J domain; the sequence is NHFELFGLVE…LRRAEYLLSL (73 aa).

The protein belongs to the HscB family. In terms of assembly, interacts with HscA and stimulates its ATPase activity.

Its function is as follows. Co-chaperone involved in the maturation of iron-sulfur cluster-containing proteins. Seems to help targeting proteins to be folded toward HscA. The chain is Co-chaperone protein HscB homolog from Aeromonas salmonicida (strain A449).